The chain runs to 353 residues: Probable peptidoglycan glycosyltransferase FtsW (353 aa).

The next 8 membrane-spanning stretches (helical) occupy residues 26–46 (IFYF…PMSF), 53–73 (LILI…KSVH), 115–135 (FWGF…LLAE), 137–157 (DLGT…LSGV), 162–182 (FFII…FEPY), 242–262 (IIGE…IFFI), 288–308 (IGLW…GILP), and 314–334 (LPLI…ICIL).

It belongs to the SEDS family. FtsW subfamily.

The protein localises to the cell inner membrane. It carries out the reaction [GlcNAc-(1-&gt;4)-Mur2Ac(oyl-L-Ala-gamma-D-Glu-L-Lys-D-Ala-D-Ala)](n)-di-trans,octa-cis-undecaprenyl diphosphate + beta-D-GlcNAc-(1-&gt;4)-Mur2Ac(oyl-L-Ala-gamma-D-Glu-L-Lys-D-Ala-D-Ala)-di-trans,octa-cis-undecaprenyl diphosphate = [GlcNAc-(1-&gt;4)-Mur2Ac(oyl-L-Ala-gamma-D-Glu-L-Lys-D-Ala-D-Ala)](n+1)-di-trans,octa-cis-undecaprenyl diphosphate + di-trans,octa-cis-undecaprenyl diphosphate + H(+). Its pathway is cell wall biogenesis; peptidoglycan biosynthesis. In terms of biological role, peptidoglycan polymerase that is essential for cell division. This Buchnera aphidicola subsp. Schizaphis graminum (strain Sg) protein is Probable peptidoglycan glycosyltransferase FtsW.